We begin with the raw amino-acid sequence, 371 residues long: tRNA-specific 2-thiouridylase MnmA (371 aa).

ATP contacts are provided by residues 22–29 (GLSGGVDS) and Met-48. The tract at residues 108 to 110 (NPD) is interaction with target base in tRNA. The active-site Nucleophile is the Cys-113. A disulfide bridge links Cys-113 with Cys-209. Residue Gly-137 participates in ATP binding. The interval 159-161 (KDQ) is interaction with tRNA. Cys-209 serves as the catalytic Cysteine persulfide intermediate.

The protein belongs to the MnmA/TRMU family.

It is found in the cytoplasm. It catalyses the reaction S-sulfanyl-L-cysteinyl-[protein] + uridine(34) in tRNA + AH2 + ATP = 2-thiouridine(34) in tRNA + L-cysteinyl-[protein] + A + AMP + diphosphate + H(+). Its function is as follows. Catalyzes the 2-thiolation of uridine at the wobble position (U34) of tRNA, leading to the formation of s(2)U34. This chain is tRNA-specific 2-thiouridylase MnmA, found in Coxiella burnetii (strain CbuG_Q212) (Coxiella burnetii (strain Q212)).